The chain runs to 87 residues: Small ribosomal subunit protein bS20 (87 aa).

The protein belongs to the bacterial ribosomal protein bS20 family.

Binds directly to 16S ribosomal RNA. The sequence is that of Small ribosomal subunit protein bS20 from Clostridium perfringens (strain ATCC 13124 / DSM 756 / JCM 1290 / NCIMB 6125 / NCTC 8237 / Type A).